The primary structure comprises 323 residues: uncharacterized protein (323 aa).

Disordered stretches follow at residues A185–W214 and G271–L294.

It belongs to the IGBP1/TAP42 family.

This is an uncharacterized protein from Schizosaccharomyces pombe (strain 972 / ATCC 24843) (Fission yeast).